The primary structure comprises 243 residues: Retrotransposon Gag-like protein 6 (243 aa).

The segment covering M1–P12 has biased composition (polar residues). Residues M1–M22 are disordered. A coiled-coil region spans residues L29–T69. Disordered regions lie at residues S84 to F105 and T218 to L243. A compositionally biased stretch (polar residues) spans A85–M94.

It belongs to the LDOC1 family. Widely expressed.

The chain is Retrotransposon Gag-like protein 6 from Mus musculus (Mouse).